The following is a 412-amino-acid chain: Multifunctional CCA protein (412 aa).

ATP is bound by residues G8 and R11. Residues G8 and R11 each contribute to the CTP site. Residues D21 and D23 each contribute to the Mg(2+) site. ATP contacts are provided by R91, R137, and R140. CTP is bound by residues R91, R137, and R140. The HD domain maps to T228–W329.

Belongs to the tRNA nucleotidyltransferase/poly(A) polymerase family. Bacterial CCA-adding enzyme type 1 subfamily. Monomer. Can also form homodimers and oligomers. Requires Mg(2+) as cofactor. Ni(2+) serves as cofactor.

The catalysed reaction is a tRNA precursor + 2 CTP + ATP = a tRNA with a 3' CCA end + 3 diphosphate. It carries out the reaction a tRNA with a 3' CCA end + 2 CTP + ATP = a tRNA with a 3' CCACCA end + 3 diphosphate. Catalyzes the addition and repair of the essential 3'-terminal CCA sequence in tRNAs without using a nucleic acid template. Adds these three nucleotides in the order of C, C, and A to the tRNA nucleotide-73, using CTP and ATP as substrates and producing inorganic pyrophosphate. tRNA 3'-terminal CCA addition is required both for tRNA processing and repair. Also involved in tRNA surveillance by mediating tandem CCA addition to generate a CCACCA at the 3' terminus of unstable tRNAs. While stable tRNAs receive only 3'-terminal CCA, unstable tRNAs are marked with CCACCA and rapidly degraded. This Escherichia coli O6:H1 (strain CFT073 / ATCC 700928 / UPEC) protein is Multifunctional CCA protein.